Consider the following 744-residue polypeptide: Cullin-1 (744 aa).

The Cullin neddylation domain maps to 674-736 (DRRYAIDASI…RDYLERDKDN (63 aa)).

This sequence belongs to the cullin family. Part of a SCF (SKP1-CUL1-F-box protein) E3 ubiquitin-protein ligase complex. Is able to form the SCF complex together with SKP1 and the rice black streaked dwarf virus RBSDV protein P7-2. Interacts with D3. Neddylated (rubylated). Deneddylation occurs upon interaction with the COP9 signalosome (CSN) complex. In terms of tissue distribution, expressed in dry seeds and coleoptiles.

Its function is as follows. Involved in ubiquitination and subsequent proteasomal degradation of target proteins. This Oryza sativa subsp. japonica (Rice) protein is Cullin-1.